A 397-amino-acid chain; its full sequence is uncharacterized protein (397 aa).

Transmembrane regions (helical) follow at residues 5–25, 43–63, 69–89, 92–112, 131–151, 157–177, 202–222, 233–253, 269–289, 293–313, 333–353, and 360–380; these read LKIL…LWPL, LVLM…GFLF, FKSI…LVFF, WPAY…VFPA, AIYV…GVVA, YVFL…YFGF, FAAL…YSQW, IGIS…LIVL, LKAQ…MLLT, FPMF…VWPA, FVNS…GVLV, and ALVL…LLYD.

Belongs to the major facilitator superfamily.

The protein resides in the cell membrane. This is an uncharacterized protein from Bacillus subtilis (strain 168).